The sequence spans 92 residues: Cell division protein FtsB (92 aa).

Residues 1–3 (MRL) lie on the Cytoplasmic side of the membrane. A helical transmembrane segment spans residues 4–21 (FVFFMLCLLVLLQYHLWF). Residues 22-92 (GKNGLGDRHN…TFFRIVPKED (71 aa)) are Periplasmic-facing. A coiled-coil region spans residues 28-62 (DRHNLQEEVTLILENNSELRQRNQMMFSEIKDLKE).

Belongs to the FtsB family. In terms of assembly, part of a complex composed of FtsB, FtsL and FtsQ.

It localises to the cell inner membrane. Its function is as follows. Essential cell division protein. May link together the upstream cell division proteins, which are predominantly cytoplasmic, with the downstream cell division proteins, which are predominantly periplasmic. The sequence is that of Cell division protein FtsB from Psychromonas ingrahamii (strain DSM 17664 / CCUG 51855 / 37).